We begin with the raw amino-acid sequence, 486 residues long: Arginine/agmatine antiporter (486 aa).

A run of 12 helical transmembrane segments spans residues 12–32 (LGAIALAGMVISSMIGGGIFS), 41–61 (AGVGAIILAWILTGVGMFFIA), 85–105 (GFGPYIGFTIGWGYWLCQIFG), 132–152 (PAILGGSILIWVFNFIVLKGI), 160–180 (IIGTVGKLVPLIVFIIITAFL), 211–231 (STMLVTLWAFIGIEGAVVMSA), 242–262 (ATILGFTGCLTVYILLSILPF), 296–316 (VGLLIAVLSSWLSWTMIVAEI), 341–361 (VSLYVTSALMQIAMLLVYFST), 367–387 (MLSITGVMVLPAYFASAAFLV), 418–438 (IWLIYAGGLKYLLMAIILLAL), and 461–481 (EVTEITIIAFLALLAIFLFST).

The protein belongs to the amino acid-polyamine-organocation (APC) superfamily. Basic amino acid/polyamine antiporter (APA) (TC 2.A.3.2) family.

It is found in the cell inner membrane. In terms of biological role, catalyzes the exchange of L-arginine for agmatine. The arginine uptake by the bacterium in the macrophage may be a virulence factor against the host innate immune response. This chain is Arginine/agmatine antiporter (aaxC), found in Chlamydia abortus (strain DSM 27085 / S26/3) (Chlamydophila abortus).